We begin with the raw amino-acid sequence, 540 residues long: Esterase B1 (540 aa).

Residues C68 and C81 are joined by a disulfide bond. S191 (acyl-ester intermediate) is an active-site residue. Residues E324 and H442 each act as charge relay system in the active site. N452 is a glycosylation site (N-linked (GlcNAc...) asparagine).

This sequence belongs to the type-B carboxylesterase/lipase family.

The enzyme catalyses a carboxylic ester + H2O = an alcohol + a carboxylate + H(+). Functionally, overproduction of nonspecific esterases is a common mechanism of resistance to organophosphate insecticides. This is Esterase B1 (B1) from Culex pipiens (House mosquito).